We begin with the raw amino-acid sequence, 439 residues long: Lipoyl synthase, mitochondrial (439 aa).

The transit peptide at 1-37 directs the protein to the mitochondrion; sequence MVASARGLRTLHSAHSSISALPASTVPRLQLAVSRCY. C150, C155, C161, C181, C185, C188, and S396 together coordinate [4Fe-4S] cluster. The Radical SAM core domain occupies 164 to 385; the sequence is GSSKSAATAT…KERALEMGFL (222 aa).

This sequence belongs to the radical SAM superfamily. Lipoyl synthase family. The cofactor is [4Fe-4S] cluster.

It is found in the mitochondrion. The catalysed reaction is [[Fe-S] cluster scaffold protein carrying a second [4Fe-4S](2+) cluster] + N(6)-octanoyl-L-lysyl-[protein] + 2 oxidized [2Fe-2S]-[ferredoxin] + 2 S-adenosyl-L-methionine + 4 H(+) = [[Fe-S] cluster scaffold protein] + N(6)-[(R)-dihydrolipoyl]-L-lysyl-[protein] + 4 Fe(3+) + 2 hydrogen sulfide + 2 5'-deoxyadenosine + 2 L-methionine + 2 reduced [2Fe-2S]-[ferredoxin]. Its pathway is protein modification; protein lipoylation via endogenous pathway; protein N(6)-(lipoyl)lysine from octanoyl-[acyl-carrier-protein]: step 2/2. In terms of biological role, catalyzes the radical-mediated insertion of two sulfur atoms into the C-6 and C-8 positions of the octanoyl moiety bound to the lipoyl domains of lipoate-dependent enzymes, thereby converting the octanoylated domains into lipoylated derivatives. The polypeptide is Lipoyl synthase, mitochondrial (Paracoccidioides lutzii (strain ATCC MYA-826 / Pb01) (Paracoccidioides brasiliensis)).